Consider the following 282-residue polypeptide: Methyltransferase tpcH (282 aa).

The protein belongs to the class I-like SAM-binding methyltransferase superfamily. In terms of tissue distribution, specifically expressed in conidia.

It participates in secondary metabolite biosynthesis. Its function is as follows. Methyltransferase; part of the gene cluster that mediates the biosynthesis of trypacidin, a mycotoxin with antiprotozoal activity and that plays a role in the infection process. The pathway begins with the synthesis of atrochrysone thioester by the polyketide synthase (PKS) tpcC. The atrochrysone carboxyl ACP thioesterase tpcB then breaks the thioester bond and releases the atrochrysone carboxylic acid from tpcC. The decarboxylase tpcK converts atrochrysone carboxylic acid to atrochrysone which is further reduced into emodin anthrone. The next step is performed by the emodin anthrone oxygenase tpcL that catalyzes the oxidation of emodinanthrone to emodin. Emodin O-methyltransferase encoded by tpcA catalyzes methylation of the 8-hydroxy group of emodin to form questin. Ring cleavage of questin by questin oxidase tpcI leads to desmethylsulochrin via several intermediates including questin epoxide. Another methylation step catalyzed by tpcM leads to the formation of sulochrin which is further converted to monomethylsulfochrin by tpcH. Finally, the tpcJ catalyzes the conversion of monomethylsulfochrin to trypacidin. Trypacidin is toxic for human pulmonary and bronchial epithelial cells by initiating the intracellular formation of nitric oxide (NO) and hydrogen peroxide (H(2)O(2)), thus triggering host necrotic cell death. The trypacidin pathway is also able to produce endocrocin via a distinct route from the endocrocin Enc pathway. The chain is Methyltransferase tpcH from Aspergillus fumigatus (strain ATCC MYA-4609 / CBS 101355 / FGSC A1100 / Af293) (Neosartorya fumigata).